The following is a 263-amino-acid chain: Chymotrypsinogen B (263 aa).

Positions 1-18 (MAFLWLVSCFALVGATFG) are cleaved as a signal peptide. 5 disulfide bridges follow: Cys19-Cys140, Cys60-Cys76, Cys154-Cys219, Cys186-Cys200, and Cys209-Cys238. The 228-residue stretch at 34–261 (IVNGEDAIPG…LMPWVQQILE (228 aa)) folds into the Peptidase S1 domain. His75 serves as the catalytic Charge relay system. Ser93 is subject to Phosphoserine. Asp120 functions as the Charge relay system in the catalytic mechanism. Ser213 functions as the Charge relay system in the catalytic mechanism.

The protein belongs to the peptidase S1 family.

The protein localises to the secreted. The protein resides in the extracellular space. The catalysed reaction is Preferential cleavage: Tyr-|-Xaa, Trp-|-Xaa, Phe-|-Xaa, Leu-|-Xaa.. In Rattus norvegicus (Rat), this protein is Chymotrypsinogen B (Ctrb1).